A 138-amino-acid chain; its full sequence is ATP synthase epsilon chain (138 aa).

It belongs to the ATPase epsilon chain family. F-type ATPases have 2 components, CF(1) - the catalytic core - and CF(0) - the membrane proton channel. CF(1) has five subunits: alpha(3), beta(3), gamma(1), delta(1), epsilon(1). CF(0) has three main subunits: a, b and c.

It localises to the cell inner membrane. In terms of biological role, produces ATP from ADP in the presence of a proton gradient across the membrane. The polypeptide is ATP synthase epsilon chain (Cupriavidus pinatubonensis (strain JMP 134 / LMG 1197) (Cupriavidus necator (strain JMP 134))).